Reading from the N-terminus, the 796-residue chain is ATP-dependent DNA helicase PIF6 (796 aa).

Residues Arg-197 to Gly-230 are disordered. Gly-255–Thr-262 is a binding site for ATP. The DNA-binding element occupies Gln-636–Phe-655. Disordered regions lie at residues Lys-692 to His-719 and Thr-762 to Asp-796.

Belongs to the helicase family. PIF1 subfamily. As to quaternary structure, monomer. Mg(2+) is required as a cofactor.

Its subcellular location is the nucleus. It carries out the reaction Couples ATP hydrolysis with the unwinding of duplex DNA at the replication fork by translocating in the 5'-3' direction. This creates two antiparallel DNA single strands (ssDNA). The leading ssDNA polymer is the template for DNA polymerase III holoenzyme which synthesizes a continuous strand.. The catalysed reaction is ATP + H2O = ADP + phosphate + H(+). In terms of biological role, DNA-dependent ATPase and 5'-3' DNA helicase required for the maintenance of genome stability. This chain is ATP-dependent DNA helicase PIF6, found in Trypanosoma brucei brucei (strain 927/4 GUTat10.1).